The following is a 642-amino-acid chain: Threonine--tRNA ligase (642 aa).

A TGS domain is found at 1 to 61 (MPVITLPDGS…ETDAELSIIT (61 aa)). Residues 243–534 (DHRKIGKQLD…LIEEYAGRFP (292 aa)) are catalytic. Residues Cys-334, His-385, and His-511 each coordinate Zn(2+).

Belongs to the class-II aminoacyl-tRNA synthetase family. As to quaternary structure, homodimer. Zn(2+) serves as cofactor.

Its subcellular location is the cytoplasm. It catalyses the reaction tRNA(Thr) + L-threonine + ATP = L-threonyl-tRNA(Thr) + AMP + diphosphate + H(+). Catalyzes the attachment of threonine to tRNA(Thr) in a two-step reaction: L-threonine is first activated by ATP to form Thr-AMP and then transferred to the acceptor end of tRNA(Thr). Also edits incorrectly charged L-seryl-tRNA(Thr). This chain is Threonine--tRNA ligase, found in Shewanella putrefaciens (strain CN-32 / ATCC BAA-453).